An 89-amino-acid chain; its full sequence is Protein YihD (89 aa).

The protein to H.influenzae HI_0845.

The polypeptide is Protein YihD (yihD) (Escherichia coli O157:H7).